A 160-amino-acid polypeptide reads, in one-letter code: 2-C-methyl-D-erythritol 2,4-cyclodiphosphate synthase (160 aa).

2 residues coordinate a divalent metal cation: D11 and H13. 4-CDP-2-C-methyl-D-erythritol 2-phosphate-binding positions include 11–13 and 37–38; these read DVH and HS. An a divalent metal cation-binding site is contributed by H45. 4-CDP-2-C-methyl-D-erythritol 2-phosphate-binding positions include 59–61, 64–68, 103–109, 135–138, F142, and R145; these read DIG, FPDTD, AQAPKMA, and TTTE.

Belongs to the IspF family. In terms of assembly, homotrimer. A divalent metal cation serves as cofactor.

It catalyses the reaction 4-CDP-2-C-methyl-D-erythritol 2-phosphate = 2-C-methyl-D-erythritol 2,4-cyclic diphosphate + CMP. The protein operates within isoprenoid biosynthesis; isopentenyl diphosphate biosynthesis via DXP pathway; isopentenyl diphosphate from 1-deoxy-D-xylulose 5-phosphate: step 4/6. Involved in the biosynthesis of isopentenyl diphosphate (IPP) and dimethylallyl diphosphate (DMAPP), two major building blocks of isoprenoid compounds. Catalyzes the conversion of 4-diphosphocytidyl-2-C-methyl-D-erythritol 2-phosphate (CDP-ME2P) to 2-C-methyl-D-erythritol 2,4-cyclodiphosphate (ME-CPP) with a corresponding release of cytidine 5-monophosphate (CMP). The sequence is that of 2-C-methyl-D-erythritol 2,4-cyclodiphosphate synthase from Thiobacillus denitrificans (strain ATCC 25259 / T1).